An 885-amino-acid polypeptide reads, in one-letter code: Alanine--tRNA ligase (885 aa).

Positions 571, 575, 674, and 678 each coordinate Zn(2+).

Belongs to the class-II aminoacyl-tRNA synthetase family. Requires Zn(2+) as cofactor.

The protein resides in the cytoplasm. The catalysed reaction is tRNA(Ala) + L-alanine + ATP = L-alanyl-tRNA(Ala) + AMP + diphosphate. In terms of biological role, catalyzes the attachment of alanine to tRNA(Ala) in a two-step reaction: alanine is first activated by ATP to form Ala-AMP and then transferred to the acceptor end of tRNA(Ala). Also edits incorrectly charged Ser-tRNA(Ala) and Gly-tRNA(Ala) via its editing domain. The protein is Alanine--tRNA ligase of Clavibacter sepedonicus (Clavibacter michiganensis subsp. sepedonicus).